The sequence spans 293 residues: 4-hydroxy-tetrahydrodipicolinate synthase (293 aa).

Thr45 provides a ligand contact to pyruvate. Catalysis depends on Tyr133, which acts as the Proton donor/acceptor. The Schiff-base intermediate with substrate role is filled by Lys161. Ile204 is a binding site for pyruvate.

The protein belongs to the DapA family. Homotetramer; dimer of dimers.

It is found in the cytoplasm. The catalysed reaction is L-aspartate 4-semialdehyde + pyruvate = (2S,4S)-4-hydroxy-2,3,4,5-tetrahydrodipicolinate + H2O + H(+). The protein operates within amino-acid biosynthesis; L-lysine biosynthesis via DAP pathway; (S)-tetrahydrodipicolinate from L-aspartate: step 3/4. In terms of biological role, catalyzes the condensation of (S)-aspartate-beta-semialdehyde [(S)-ASA] and pyruvate to 4-hydroxy-tetrahydrodipicolinate (HTPA). The protein is 4-hydroxy-tetrahydrodipicolinate synthase of Yersinia pseudotuberculosis serotype I (strain IP32953).